The following is a 34-amino-acid chain: Subtilosin-A (34 aa).

The cyclopeptide (Asn-Gly) cross-link spans 1-34 (NKGCATCSIGIACLVDGPIPDFECAGATGLGLWG). Positions 7–28 (CSIGIACLVDGPIPDFECAGAT) form a cross-link, 2-cysteinyl-D-allo-threonine (Cys-Thr). Residues 13-22 (CLVDGPIPDF) constitute a cross-link (2-cysteinyl-L-phenylalanine (Cys-Phe)).

The protein belongs to the bacteriocin class V family. Post-translationally, alpha-amino of Asn-1 is covalently linked with the carboxyl of Gly-34 to form a cyclopeptide. Thioether cross-links are formed between cysteines and the alpha-carbons of other amino acids, Cys-7 to Thr-28 and Cys-13 to Phe-22. In forming this cross-link, Thr-28 is converted to D-amino acid.

Its subcellular location is the secreted. Functionally, has bactericidal activity against some Gram-positive bacteria. In Cytobacillus firmus (Bacillus firmus), this protein is Subtilosin-A.